The following is a 227-amino-acid chain: E3 ubiquitin-protein ligase ZNRF1 (227 aa).

A disordered region spans residues Met-1–Arg-38. Gly-2 carries the N-myristoyl glycine lipid modification. The interval Gly-2 to Arg-10 is required for endosomal and lysosomal localization and myristoylation. A phosphoserine mark is found at Ser-50, Ser-52, and Ser-53. Residues Arg-77–Glu-105 form a disordered region. Tyr-103 carries the phosphotyrosine modification. At Ser-123 the chain carries Phosphoserine. Residues Cys-184–Pro-225 form an RING-type; atypical zinc finger.

In terms of assembly, interacts with AKT1, GLUL and TUBB2A. Interacts with ZNRF2. Interacts (via its RING domain) with UBE2N. Interacts (when phosphorylated) with YWHAE. In terms of processing, N-myristoylation targets ZNRF1 to intracellular membranes. Phosphorylated by SRC at Tyr-103; leading to 'Lys-63'-linked ubiquitination of TLR3, lysosomal trafficking and degradation.

It localises to the endosome. Its subcellular location is the lysosome. It is found in the membrane. The protein localises to the cytoplasmic vesicle. The protein resides in the secretory vesicle. It localises to the synaptic vesicle membrane. The catalysed reaction is S-ubiquitinyl-[E2 ubiquitin-conjugating enzyme]-L-cysteine + [acceptor protein]-L-lysine = [E2 ubiquitin-conjugating enzyme]-L-cysteine + N(6)-ubiquitinyl-[acceptor protein]-L-lysine.. It functions in the pathway protein modification; protein ubiquitination. Its function is as follows. E3 ubiquitin-protein ligase that plays a role in different processes including cell differentiation, receptor recycling or regulation of inflammation. Mediates the ubiquitination of AKT1 and GLUL, thereby playing a role in neuron cells differentiation. Plays a role in the establishment and maintenance of neuronal transmission and plasticity. Regulates Schwann cells differentiation by mediating ubiquitination of GLUL. Promotes neurodegeneration by mediating 'Lys-48'-linked polyubiquitination and subsequent degradation of AKT1 in axons: degradation of AKT1 prevents AKT1-mediated phosphorylation of GSK3B, leading to GSK3B activation and phosphorylation of DPYSL2/CRMP2 followed by destabilization of microtubule assembly in axons. Ubiquitinates the Na(+)/K(+) ATPase alpha-1 subunit/ATP1A1 and thereby influences its endocytosis and/or degradation. Controls ligand-induced EGFR signaling via mediating receptor ubiquitination and recruitment of the ESCRT machinery. Acts as a negative feedback mechanism controlling TLR3 trafficking by mediating TLR3 'Lys-63'-linked polyubiquitination to reduce type I IFN production. Modulates inflammation by promoting caveolin-1/CAV1 ubiquitination and degradation to regulate TLR4-activated immune response. The protein is E3 ubiquitin-protein ligase ZNRF1 (ZNRF1) of Bos taurus (Bovine).